The chain runs to 215 residues: UPF0502 protein PputGB1_3531 (215 aa).

This sequence belongs to the UPF0502 family.

This is UPF0502 protein PputGB1_3531 from Pseudomonas putida (strain GB-1).